The primary structure comprises 369 residues: Cobalt-precorrin-5B C(1)-methyltransferase (369 aa).

This sequence belongs to the CbiD family.

The enzyme catalyses Co-precorrin-5B + S-adenosyl-L-methionine = Co-precorrin-6A + S-adenosyl-L-homocysteine. The protein operates within cofactor biosynthesis; adenosylcobalamin biosynthesis; cob(II)yrinate a,c-diamide from sirohydrochlorin (anaerobic route): step 6/10. Its function is as follows. Catalyzes the methylation of C-1 in cobalt-precorrin-5B to form cobalt-precorrin-6A. The polypeptide is Cobalt-precorrin-5B C(1)-methyltransferase (Methanococcus vannielii (strain ATCC 35089 / DSM 1224 / JCM 13029 / OCM 148 / SB)).